The following is a 178-amino-acid chain: Alkyl hydroperoxide reductase AhpD (178 aa).

C131 functions as the Proton donor in the catalytic mechanism. The cysteines at positions 131 and 134 are disulfide-linked. Residue C134 is the Cysteine sulfenic acid (-SOH) intermediate of the active site.

The protein belongs to the AhpD family.

The enzyme catalyses N(6)-[(R)-dihydrolipoyl]-L-lysyl-[lipoyl-carrier protein] + a hydroperoxide = N(6)-[(R)-lipoyl]-L-lysyl-[lipoyl-carrier protein] + an alcohol + H2O. Antioxidant protein with alkyl hydroperoxidase activity. Required for the reduction of the AhpC active site cysteine residues and for the regeneration of the AhpC enzyme activity. The polypeptide is Alkyl hydroperoxide reductase AhpD (Methylocella silvestris (strain DSM 15510 / CIP 108128 / LMG 27833 / NCIMB 13906 / BL2)).